The chain runs to 119 residues: Large ribosomal subunit protein uL18 (119 aa).

The disordered stretch occupies residues 1 to 22; that stretch reads MGHVEKVARRHKIKTRSKARGQ. Residues 8–19 are compositionally biased toward basic residues; it reads ARRHKIKTRSKA.

The protein belongs to the universal ribosomal protein uL18 family. Part of the 50S ribosomal subunit; part of the 5S rRNA/L5/L18/L25 subcomplex. Contacts the 5S and 23S rRNAs.

Functionally, this is one of the proteins that bind and probably mediate the attachment of the 5S RNA into the large ribosomal subunit, where it forms part of the central protuberance. This is Large ribosomal subunit protein uL18 from Chlorobium phaeobacteroides (strain BS1).